Reading from the N-terminus, the 564-residue chain is Probable diguanylate cyclase DgcQ (564 aa).

Helical transmembrane passes span 20–40 (LGPG…STLL) and 360–380 (IALT…WYVI). Positions 428–563 (HPFSVIQVDL…GRNRVFASDN (136 aa)) constitute a GGDEF domain. A Mg(2+)-binding site is contributed by D436. Substrate-binding residues include N444, H449, and D453. Position 479 (E479) interacts with Mg(2+). E479 (proton acceptor) is an active-site residue.

In terms of assembly, homodimer. The cofactor is Mg(2+).

It localises to the cell inner membrane. The enzyme catalyses 2 GTP = 3',3'-c-di-GMP + 2 diphosphate. Its pathway is glycan metabolism; bacterial cellulose biosynthesis. The protein operates within purine metabolism; 3',5'-cyclic di-GMP biosynthesis. Its function is as follows. Catalyzes the synthesis of cyclic-di-GMP (c-di-GMP) via the condensation of 2 GTP molecules. Cyclic-di-GMP is a second messenger which controls cell surface-associated traits in bacteria. Involved in the regulation of cellulose production. The sequence is that of Probable diguanylate cyclase DgcQ from Escherichia coli O157:H7.